Here is a 107-residue protein sequence, read N- to C-terminus: BolA-like protein 3 (107 aa).

This sequence belongs to the BolA/IbaG family. Interacts with NFU1. Widely expressed.

It is found in the mitochondrion. Its function is as follows. Acts as a mitochondrial iron-sulfur (Fe-S) cluster assembly factor that facilitates (Fe-S) cluster insertion into a subset of mitochondrial proteins. Probably acts together with NFU1. The protein is BolA-like protein 3 of Homo sapiens (Human).